Here is a 447-residue protein sequence, read N- to C-terminus: Probable arabinosyltransferase ARAD1 (447 aa).

Residues 1 to 6 are Cytoplasmic-facing; the sequence is MARKSS. The chain crosses the membrane as a helical; Signal-anchor for type II membrane protein span at residues 7-29; the sequence is LLKRAAIAVVSVIAIYVILNASV. At 30–447 the chain is on the lumenal side; it reads SRSLPSSSDL…TNQTGLITSI (418 aa). The span at 32–41 shows a compositional bias: low complexity; it reads SLPSSSDLPR. The disordered stretch occupies residues 32–52; that stretch reads SLPSSSDLPRQLIREDDDDEG. Asn-427, Asn-432, and Asn-439 each carry an N-linked (GlcNAc...) asparagine glycan.

The protein belongs to the glycosyltransferase 47 family. In terms of assembly, homodimer and heterodimer with ARAD2. As to expression, expressed in root vasculature, cotyledons, leaves, stems, vascular tissue of sepals, petals and stamens, pollen grains, mature siliques and abscission region of seeds.

Its subcellular location is the golgi apparatus membrane. In terms of biological role, probable arabinosyl transferase responsible for the polymerization of arabinose into the arabinan of arabinogalactan. May function as inverting enzyme using UDP-beta-L-arabinopyranoside. May be important for arabinan side chains of rhamnogalacturonan I (RG-I), a major component of pectins. Cell wall pectic arabinans are involved in thigmomorphogenesis response of inflorescence stems to mechanical stress. This chain is Probable arabinosyltransferase ARAD1 (ARAD1), found in Arabidopsis thaliana (Mouse-ear cress).